Consider the following 291-residue polypeptide: ATP synthase subunit a (291 aa).

Transmembrane regions (helical) follow at residues 48 to 68 (IHLD…LVFW), 108 to 128 (IAPL…MDLI), 161 to 181 (DPNI…FYSI), 241 to 261 (LIFI…SVPW), and 262 to 282 (AIFH…LTIV).

This sequence belongs to the ATPase A chain family. F-type ATPases have 2 components, CF(1) - the catalytic core - and CF(0) - the membrane proton channel. CF(1) has five subunits: alpha(3), beta(3), gamma(1), delta(1), epsilon(1). CF(0) has three main subunits: a(1), b(2) and c(9-12). The alpha and beta chains form an alternating ring which encloses part of the gamma chain. CF(1) is attached to CF(0) by a central stalk formed by the gamma and epsilon chains, while a peripheral stalk is formed by the delta and b chains.

It is found in the cell inner membrane. Functionally, key component of the proton channel; it plays a direct role in the translocation of protons across the membrane. The sequence is that of ATP synthase subunit a from Acinetobacter baylyi (strain ATCC 33305 / BD413 / ADP1).